A 342-amino-acid polypeptide reads, in one-letter code: Isopentenyl-diphosphate delta-isomerase (342 aa).

Position 11 to 12 (11 to 12 (RK)) interacts with substrate. Residues S68, 69 to 71 (SMT), S99, and N127 contribute to the FMN site. 99–101 (SMR) contributes to the substrate binding site. Q162 provides a ligand contact to substrate. Residue E163 coordinates Mg(2+). FMN is bound by residues K194, T224, 274-276 (GLK), and 295-296 (AG).

It belongs to the IPP isomerase type 2 family. As to quaternary structure, homooctamer. Dimer of tetramers. FMN serves as cofactor. It depends on NADPH as a cofactor. Requires Mg(2+) as cofactor.

The protein localises to the cytoplasm. The catalysed reaction is isopentenyl diphosphate = dimethylallyl diphosphate. Functionally, involved in the biosynthesis of isoprenoids. Catalyzes the 1,3-allylic rearrangement of the homoallylic substrate isopentenyl (IPP) to its allylic isomer, dimethylallyl diphosphate (DMAPP). This Rickettsia peacockii (strain Rustic) protein is Isopentenyl-diphosphate delta-isomerase.